The chain runs to 622 residues: Chaperone protein HscA homolog (622 aa).

The protein belongs to the heat shock protein 70 family.

Functionally, chaperone involved in the maturation of iron-sulfur cluster-containing proteins. Has a low intrinsic ATPase activity which is markedly stimulated by HscB. This is Chaperone protein HscA homolog from Burkholderia cenocepacia (strain HI2424).